The primary structure comprises 548 residues: Lipase 2 (548 aa).

A signal peptide spans 1 to 14 (MKLCLLALGAAVAA). Residues Cys74 and Cys111 are joined by a disulfide bond. Catalysis depends on Ser223, which acts as the Acyl-ester intermediate. A disulfide bridge connects residues Cys282 and Cys291. The active-site Charge relay system is the Glu355. Asn365 carries N-linked (GlcNAc...) asparagine glycosylation. His463 acts as the Charge relay system in catalysis.

Belongs to the type-B carboxylesterase/lipase family.

The catalysed reaction is a triacylglycerol + H2O = a diacylglycerol + a fatty acid + H(+). In Diutina rugosa (Yeast), this protein is Lipase 2 (LIP2).